A 326-amino-acid chain; its full sequence is Histone-lysine N-methyltransferase Suv4-20 (326 aa).

Residues 163–273 (QECTRYSLEG…AGDEITCFYG (111 aa)) form the SET domain. The tract at residues 294 to 313 (RGKFSTSDEEENDEPSALSE) is disordered.

It belongs to the class V-like SAM-binding methyltransferase superfamily. Histone-lysine methyltransferase family. Suvar4-20 subfamily.

Its subcellular location is the nucleus. The protein localises to the chromosome. The catalysed reaction is N(6)-methyl-L-lysyl(20)-[histone H4] + S-adenosyl-L-methionine = N(6),N(6)-dimethyl-L-lysyl(20)-[histone H4] + S-adenosyl-L-homocysteine + H(+). The enzyme catalyses N(6),N(6)-dimethyl-L-lysyl(20)-[histone H4] + S-adenosyl-L-methionine = N(6),N(6),N(6)-trimethyl-L-lysyl(20)-[histone H4] + S-adenosyl-L-homocysteine + H(+). In terms of biological role, histone methyltransferase that specifically di- and trimethylates 'Lys-20' of histone H4 (H4K20me2/me3). H4 'Lys-20' trimethylation represents a specific tag for epigenetic transcriptional repression. Contributes to dosage compensation of X chromosome-relative to autosome-linked gene expression, possibly by converting H4K20me1 to H4K20m2/me3 on autosomes. Involved in the regulation of growth and body fat metabolism downstream of the TOR complex 2 pathway. This Caenorhabditis briggsae protein is Histone-lysine N-methyltransferase Suv4-20.